A 465-amino-acid chain; its full sequence is Serine carboxypeptidase-like 19 (465 aa).

Residues 1–23 (MRNLSFIVLFLLTLFFIHHLVDA) form the signal peptide. Substrate is bound at residue 77 to 79 (TGG). Cystine bridges form between Cys82/Cys353, Cys246/Cys260, and Cys284/Cys320. Asn103 carries an N-linked (GlcNAc...) asparagine glycan. 177–179 (DSY) provides a ligand contact to substrate. The active site involves Ser178. A propeptide spans 292–317 (DTPNIRTDRRRVMKEFSVNDSSSLPP) (linker peptide). N-linked (GlcNAc...) asparagine glycans are attached at residues Asn310 and Asn373. Asp389 is a catalytic residue. N-linked (GlcNAc...) asparagine glycosylation is present at Asn405. 439–443 (KGGGH) serves as a coordination point for substrate. Residue His443 is part of the active site.

Belongs to the peptidase S10 family. In terms of assembly, heterodimer. N-glycosylated. In terms of tissue distribution, expressed in roots and flowers, and at lower levels in young leaves and seedlings. Expressed in mature seeds and detected in expanding siliques.

The protein localises to the secreted. The enzyme catalyses 1-O-(trans-sinapoyl)-beta-D-glucose + choline = O-sinapoylcholine + D-glucose. Its activity is regulated as follows. Slightly inhibited by phenylmethylsulfonyl fluoride (PMSF). Functionally, involved in plants secondary metabolism. Functions as acyltransferase to form the sinapate ester sinapoylcholine also known as sinapine. Able to convert in vitro benzoylglucose into benzoylcholine. The polypeptide is Serine carboxypeptidase-like 19 (Arabidopsis thaliana (Mouse-ear cress)).